Consider the following 1849-residue polypeptide: MTKIVMLDYIPMLNNGGHRHPADIKPSMINSLLDSMSIILTSLCTFCEQLSLNEAIIVNLGINTLDQLLMSQAGRYLLLYYCIYALELYTVCYSTLSLILLYLIQLNYILLTNIVGYLQYSCSEIANLVYTYILLEGLLDVSELDALVVETLLDYLWVPCDLIIRYYRAYWYFEGVYFNLNIPYVQRSAYWLCVVIWNNIGWWTYQLMIIGWYSLSCLCIRLVPTILAIINLILTYIDLIIYLYDIYSNYSNMTWLGILYSTINSIIRYDISRIHAYQHLLTVIIPNYCLAIYNSGLILSSLLLDIYHYQIGLTILALQYLVAPLYISCSLLIYILCYIMTELLYSRSFYIDLLLRLLEIIYLDILVNSLISIIILILSVDVAYLIQLQVIILSQYINIISGYVAMPTTILITWYLYNIAVYIYYLVDYIATISTLIIWLLERILWVYGICANNIEPVVIDLPQLTLTSLDALLNQLLSEWCLLDAIMNVVTSVILLITVSCLGVLRIILFIAVYPVYCIGVLLLNTLLQVVVGLISYIIGTFMNAIILICDIYVYSIHRPFLPLIMYVYFVAAIILEPIIDIIHTIILAEHALFNTYCYIIFDILQPLHLQAFEFYRDLIWLIADLILAYIDLIRSTLVEGIISFIKWRLEQDFQLVYDICEFYLDEVKPRIIRYWNIYSRWVRFLIYCAGNNINLLVLLYVQFKGYTLPMIILFDLTRIQLYATIPVIISSYIYQGILQTMLIISYYNTLLVATLEFIQIWLTILSVSPEMLYTSTLGILLRSYYLLYEILLLEPTWVLFECLSTCVGLVELYLVTVETTVSNILIIDLILMEVLLEDIRQVATILTCILDWYILETCLDMQYADILLLMSSGLQSTVLNTIFDLLSLLGLLDETSIRFILELTVQVCTIPAALYSTIIYPYIVLVTRCLLYLPDVVQLYLTIGEYLLRETLYQLLIDWASCKLYSYNLYLLELYNIYYFWLSLLEKYWTFTYHIYNYTTLVELSPDLLISLISYIIDICILSLELLLEDIRWGSTIFVNLLDWYLLDTQLNIQYIDILLITSYSVQNTLLTVVFYILNLCGILNEISIQILFEITVQICTILATIYCTVVLPYILIILEILSYLPEIVQLYLDIGEHLLLEILWQLLIDLLYYRAYDYILIAQLLCKVTYLLYIVLEQLLLVIIDLYIYIIGDLLIIGSCHVGNHIIDILCSAENVYFLYFMIFIGYLLCGIFAFFYHGYLGTRGIFYLSEMIIMGILIFSIVTLYYNLKYHLALDIILGELALSNEVIFTNIITFDILSILGVLLVATLTAIILTFGVEYMLREAFAYNVLATLVLFSASIICFIVSYSFGLMIIFWEISGTLSLFLIDMYYARIRTTQAVTRTFALNRFGDLWMFTASIEIYSLCHNDALPTLFALLPYAQFNLSILGNLIFDFTIPTVIVFSIFSAAACKCAQFLLFVWLPDAMEAPTPASALIHSSTLVVMGIFMILRFAPILHLSVYTLYIMSILGSLTVAYGAILATQTSDLKKAVAYSTISQIGYLFTGCAFLAFRATLIYLILHAICKALLFVLVGYIVHMFGGTTSLRRMGGIYYIVPDIAIYMFILCMVLAGAPYTVGFFAKELIVTTLTNTSSPVATFIICCWIISFACTPFYLYRICVLPLFGRPRCSRRVFRNIVSPQSTYNFIDSDSSLNSLLHKFTNLITRWSVQGRFTNLLHLLLLLIVLFCGEFLVFLVTGLFGTSTTLFSDTAIDDSVYQLTDYYLLSYYRVRNIQLLIIVLFALVTLYITAINNQLTFNIIYLSVVLPILAIIFICLGHYFLVDFTVYIYNISNSLIFELLCDLAIC.

41 helical membrane-spanning segments follow: residues Tyr-76–Tyr-93, Leu-98–Tyr-120, Tyr-190–Trp-212, Leu-222–Tyr-244, His-279–Ser-301, Leu-316–Tyr-338, Leu-358–Val-380, Val-390–Ile-412, Ile-419–Leu-441, Leu-483–Val-505, Leu-510–Val-532, Ile-536–Ile-558, Leu-565–Ile-587, Ile-621–Val-640, Trp-683–Phe-705, Leu-718–Leu-740, Ile-745–Leu-767, Pro-797–Val-819, Ile-868–Leu-890, Leu-905–Leu-927, Leu-966–Glu-988, Pro-1008–Leu-1030, Leu-1073–Phe-1095, Leu-1105–Leu-1127, Thr-1172–Ile-1194, Val-1219–His-1241, Gly-1248–Tyr-1270, Ile-1296–Leu-1318, Phe-1330–Tyr-1352, Met-1357–Ile-1379, Leu-1418–Thr-1440, Val-1444–Leu-1466, Ala-1478–Leu-1500, Val-1504–Thr-1526, Lys-1533–Phe-1555, Leu-1559–His-1581, Ile-1602–Ala-1624, Val-1639–Ile-1661, Leu-1719–Gly-1741, Val-1773–Asn-1795, and Ile-1802–Leu-1824.

Belongs to the complex I subunit 5 family.

The protein localises to the hydrogenosome membrane. It carries out the reaction a ubiquinone + NADH + 5 H(+)(in) = a ubiquinol + NAD(+) + 4 H(+)(out). The chain is NADH-ubiquinone oxidoreductase chain 5 (nad5) from Nyctotherus ovalis.